We begin with the raw amino-acid sequence, 307 residues long: Stage III sporulation protein AA (307 aa).

143-150 (GPPQTGKT) lines the ATP pocket.

The polypeptide is Stage III sporulation protein AA (spoIIIAA) (Bacillus subtilis (strain 168)).